The primary structure comprises 82 residues: NADH-ubiquinone oxidoreductase 9.5 kDa subunit (82 aa).

A helical transmembrane segment spans residues 25 to 43; that stretch reads AYFYSCVIAGLGPVFLTVV.

Belongs to the complex I NDUFA3 subunit family. As to quaternary structure, complex I is composed of about 40 different subunits.

The protein resides in the mitochondrion inner membrane. Its function is as follows. Accessory subunit of the mitochondrial membrane respiratory chain NADH dehydrogenase (Complex I), that is believed not to be involved in catalysis. Complex I functions in the transfer of electrons from NADH to the respiratory chain. The immediate electron acceptor for the enzyme is believed to be ubiquinone. This subunit binds ubiquinone. The polypeptide is NADH-ubiquinone oxidoreductase 9.5 kDa subunit (nuo9.5) (Neurospora crassa (strain ATCC 24698 / 74-OR23-1A / CBS 708.71 / DSM 1257 / FGSC 987)).